Reading from the N-terminus, the 649-residue chain is Echinoderm microtubule-associated protein-like 2 (649 aa).

Residues lysine 10 to alanine 649 form a tandem atypical propeller in EMLs region. WD repeat units lie at residues lysine 56–valine 93, arginine 97–serine 144, histidine 151–tryptophan 192, glutamate 195–leucine 234, lysine 241–lysine 280, isoleucine 285–serine 323, phenylalanine 369–serine 406, glutamine 410–threonine 447, leucine 452–valine 489, lysine 495–alanine 535, phenylalanine 564–tyrosine 602, and alanine 609–valine 648.

The protein belongs to the WD repeat EMAP family. Interacts with GRID2 and may also interact with GRID1. Interacts with EML3. Binds unpolymerized tubulins via its WD repeat region. As to expression, widely expressed in both brain and peripheral tissues, including brainstem and enrichment in the postsynaptic density, PSD.

It localises to the cytoplasm. It is found in the cytoskeleton. Its subcellular location is the spindle. Its function is as follows. Tubulin binding protein that inhibits microtubule nucleation and growth, resulting in shorter microtubules. This is Echinoderm microtubule-associated protein-like 2 (Eml2) from Rattus norvegicus (Rat).